Consider the following 607-residue polypeptide: Threonine--tRNA ligase (607 aa).

The tract at residues 1 to 143 (MRVLYIHAER…SFKPEEARVA (143 aa)) is editing domain. 2 catalytic regions span residues 193–489 (PRYL…PRLP) and 194–489 (RYLD…PRLP). Positions 286, 337, and 458 each coordinate Zn(2+).

It belongs to the class-II aminoacyl-tRNA synthetase family. In terms of assembly, homodimer. It depends on Zn(2+) as a cofactor.

The protein localises to the cytoplasm. It catalyses the reaction tRNA(Thr) + L-threonine + ATP = L-threonyl-tRNA(Thr) + AMP + diphosphate + H(+). Functionally, catalyzes the attachment of threonine to tRNA(Thr) in a two-step reaction: L-threonine is first activated by ATP to form Thr-AMP and then transferred to the acceptor end of tRNA(Thr). Also edits incorrectly charged L-seryl-tRNA(Thr). This chain is Threonine--tRNA ligase, found in Pyrobaculum calidifontis (strain DSM 21063 / JCM 11548 / VA1).